Consider the following 263-residue polypeptide: UPF0739 protein C1orf74 homolog (263 aa).

This sequence belongs to the UPF0739 family.

The protein is UPF0739 protein C1orf74 homolog of Xenopus tropicalis (Western clawed frog).